Reading from the N-terminus, the 375-residue chain is Growth/differentiation factor 8 (375 aa).

Residues 1–18 (MQKLQISVYIYLFVLILA) form the signal peptide. A propeptide spanning residues 19-266 (GPVDLNENSE…VTDTPKRSRR (248 aa)) is cleaved from the precursor. Asn71 carries N-linked (GlcNAc...) asparagine glycosylation. 4 cysteine pairs are disulfide-bonded: Cys272/Cys282, Cys281/Cys340, Cys309/Cys372, and Cys313/Cys374.

It belongs to the TGF-beta family. As to quaternary structure, homodimer; disulfide-linked. Interacts with WFIKKN2, leading to inhibit its activity. Interacts with FSTL3. In terms of processing, synthesized as large precursor molecule that undergoes proteolytic cleavage to generate an N-terminal propeptide and a disulfide linked C-terminal dimer, which is the biologically active molecule. The circulating form consists of a latent complex of the C-terminal dimer and other proteins, including its propeptide, which maintain the C-terminal dimer in a latent, inactive state. Ligand activation requires additional cleavage of the prodomain by a tolloid-like metalloproteinase.

The protein localises to the secreted. In terms of biological role, acts specifically as a negative regulator of skeletal muscle growth. The polypeptide is Growth/differentiation factor 8 (MSTN) (Equus caballus (Horse)).